The chain runs to 215 residues: Chaperone protein TorD (215 aa).

Belongs to the TorD/DmsD family. TorD subfamily.

The protein localises to the cytoplasm. Involved in the biogenesis of TorA. Acts on TorA before the insertion of the molybdenum cofactor and, as a result, probably favors a conformation of the apoenzyme that is competent for acquiring the cofactor. In Shewanella piezotolerans (strain WP3 / JCM 13877), this protein is Chaperone protein TorD.